The chain runs to 282 residues: Polyamine aminopropyltransferase (282 aa).

One can recognise a PABS domain in the interval 11–239 (IEWYPRGYGV…SPWSFLVGVK (229 aa)). Position 36 (Q36) interacts with S-methyl-5'-thioadenosine. Spermidine is bound by residues H67 and D91. S-methyl-5'-thioadenosine is bound by residues E111 and 142-143 (DG). Residue D160 is the Proton acceptor of the active site. A spermidine-binding site is contributed by 160-163 (DSTD). Residue P167 participates in S-methyl-5'-thioadenosine binding.

This sequence belongs to the spermidine/spermine synthase family. In terms of assembly, homodimer or homotetramer.

The protein resides in the cytoplasm. It carries out the reaction S-adenosyl 3-(methylsulfanyl)propylamine + putrescine = S-methyl-5'-thioadenosine + spermidine + H(+). It functions in the pathway amine and polyamine biosynthesis; spermidine biosynthesis; spermidine from putrescine: step 1/1. Catalyzes the irreversible transfer of a propylamine group from the amino donor S-adenosylmethioninamine (decarboxy-AdoMet) to putrescine (1,4-diaminobutane) to yield spermidine. This Thermococcus onnurineus (strain NA1) protein is Polyamine aminopropyltransferase.